The sequence spans 363 residues: Aminomethyltransferase (363 aa).

Belongs to the GcvT family. In terms of assembly, the glycine cleavage system is composed of four proteins: P, T, L and H.

It carries out the reaction N(6)-[(R)-S(8)-aminomethyldihydrolipoyl]-L-lysyl-[protein] + (6S)-5,6,7,8-tetrahydrofolate = N(6)-[(R)-dihydrolipoyl]-L-lysyl-[protein] + (6R)-5,10-methylene-5,6,7,8-tetrahydrofolate + NH4(+). In terms of biological role, the glycine cleavage system catalyzes the degradation of glycine. The polypeptide is Aminomethyltransferase (Picosynechococcus sp. (strain ATCC 27264 / PCC 7002 / PR-6) (Agmenellum quadruplicatum)).